The sequence spans 783 residues: Lon protease (783 aa).

Residues 11-203 enclose the Lon N-terminal domain; that stretch reads IPVLPLRDVV…FLMGQMESEI (193 aa). 355-362 is an ATP binding site; sequence GPPGVGKT. Positions 591-772 constitute a Lon proteolytic domain; it reads SNRIGQVTGL…DEVLKVALER (182 aa). Catalysis depends on residues S678 and K721.

This sequence belongs to the peptidase S16 family. In terms of assembly, homohexamer. Organized in a ring with a central cavity.

It localises to the cytoplasm. The catalysed reaction is Hydrolysis of proteins in presence of ATP.. Functionally, ATP-dependent serine protease that mediates the selective degradation of mutant and abnormal proteins as well as certain short-lived regulatory proteins. Required for cellular homeostasis and for survival from DNA damage and developmental changes induced by stress. Degrades polypeptides processively to yield small peptide fragments that are 5 to 10 amino acids long. Binds to DNA in a double-stranded, site-specific manner. Regulates swarmer cell differentiation of V.parahaemolyticus. The protein is Lon protease of Vibrio parahaemolyticus serotype O3:K6 (strain RIMD 2210633).